The sequence spans 232 residues: CMP-N,N'-diacetyllegionaminic acid synthase (232 aa).

Belongs to the CMP-NeuNAc synthase family.

The catalysed reaction is N,N-diacetyllegionaminate + CTP = CMP-N,N-diacetyllegionaminate + diphosphate. Functionally, involved in biosynthesis of legionaminic acid (5,7-diamino-3,5,7,9-tetradeoxy-D-glycero-D-galacto-non-2-ulosonic acid)(Leg), a sialic acid-like derivative that is incorporated into virulence-associated cell surface glycoconjugates such as lipopolysaccharide (LPS) which could be a key determinant in the ability of L.pneumophila to inhibit the fusion of phagosomes with lysosomes. LPS contains a majority alpha2,4-linked homomer of legionaminic acid. Catalyzes the conversion of N,N'-diacetyllegionaminic acid (Leg5Ac7Ac) and CTP into CMP-N,N'-diacetyllegionaminic acid (CMP-Leg5Ac7Ac). The protein is CMP-N,N'-diacetyllegionaminic acid synthase (neuA) of Legionella pneumophila subsp. pneumophila (strain Philadelphia 1 / ATCC 33152 / DSM 7513).